The chain runs to 128 residues: Leucine-rich single-pass membrane protein 1 (128 aa).

Phosphoserine is present on Ser-24. Residues 66–86 traverse the membrane as a helical segment; sequence GLLLVLTVSLALVFFAIFLII. The stretch at 90–111 forms a coiled coil; sequence NQMEDVSRRLTAEGKDIDDLKK.

It is found in the membrane. This chain is Leucine-rich single-pass membrane protein 1 (Lsmem1), found in Mus musculus (Mouse).